The chain runs to 968 residues: Glycine dehydrogenase (decarboxylating) (968 aa).

The residue at position 712 (K712) is an N6-(pyridoxal phosphate)lysine.

The protein belongs to the GcvP family. As to quaternary structure, the glycine cleavage system is composed of four proteins: P, T, L and H. Pyridoxal 5'-phosphate serves as cofactor.

It catalyses the reaction N(6)-[(R)-lipoyl]-L-lysyl-[glycine-cleavage complex H protein] + glycine + H(+) = N(6)-[(R)-S(8)-aminomethyldihydrolipoyl]-L-lysyl-[glycine-cleavage complex H protein] + CO2. In terms of biological role, the glycine cleavage system catalyzes the degradation of glycine. The P protein binds the alpha-amino group of glycine through its pyridoxal phosphate cofactor; CO(2) is released and the remaining methylamine moiety is then transferred to the lipoamide cofactor of the H protein. This is Glycine dehydrogenase (decarboxylating) from Prochlorococcus marinus (strain NATL1A).